Consider the following 32-residue polypeptide: GFLDIINKLGKTFAGHMLDKIKCTIGTCPPSP.

Residues cysteine 23 and cysteine 28 are joined by a disulfide bond.

Belongs to the frog skin active peptide (FSAP) family. Ranatuerin subfamily. As to expression, expressed by the skin glands.

The protein resides in the secreted. Functionally, antibacterial activity against Gram-positive bacterium S.aureus (MIC=60 uM). Shows no detectable hemolytic activity towards human erythrocytes. In Aquarana catesbeiana (American bullfrog), this protein is Ranatuerin-3.